Reading from the N-terminus, the 477-residue chain is Cysteine--tRNA ligase (477 aa).

Position 28 (Cys-28) interacts with Zn(2+). The short motif at 30 to 40 (PTVYDYPHLGH) is the 'HIGH' region element. 3 residues coordinate Zn(2+): Cys-208, His-233, and Glu-237. The 'KMSKS' region motif lies at 265–269 (KMSKS). Lys-268 contacts ATP.

It belongs to the class-I aminoacyl-tRNA synthetase family. The cofactor is Zn(2+).

It localises to the cytoplasm. It carries out the reaction tRNA(Cys) + L-cysteine + ATP = L-cysteinyl-tRNA(Cys) + AMP + diphosphate. The protein is Cysteine--tRNA ligase of Pyrococcus furiosus (strain ATCC 43587 / DSM 3638 / JCM 8422 / Vc1).